The sequence spans 140 residues: Nucleoside diphosphate kinase (140 aa).

6 residues coordinate ATP: Lys11, Phe59, Arg87, Thr93, Arg104, and Asn114. His117 (pros-phosphohistidine intermediate) is an active-site residue.

It belongs to the NDK family. In terms of assembly, homotetramer. Mg(2+) serves as cofactor.

Its subcellular location is the cytoplasm. The catalysed reaction is a 2'-deoxyribonucleoside 5'-diphosphate + ATP = a 2'-deoxyribonucleoside 5'-triphosphate + ADP. It carries out the reaction a ribonucleoside 5'-diphosphate + ATP = a ribonucleoside 5'-triphosphate + ADP. In terms of biological role, major role in the synthesis of nucleoside triphosphates other than ATP. The ATP gamma phosphate is transferred to the NDP beta phosphate via a ping-pong mechanism, using a phosphorylated active-site intermediate. The chain is Nucleoside diphosphate kinase from Granulibacter bethesdensis (strain ATCC BAA-1260 / CGDNIH1).